An 89-amino-acid polypeptide reads, in one-letter code: Barrier-to-autointegration factor 1 (89 aa).

Belongs to the BAF family. As to quaternary structure, interacts with emr-1 and lem-2. Interacts with lem-4l, leading to decreased phosphorylation by VRK1 and promoting dephosphorylation by protein phosphatase 2A (PP2A). In terms of processing, phosphorylated by vrk-1. Phosphorylation by vrk-1 in mitosis is essential to achieve correct timing of recruitment of nuclear envelope components during nuclear envelope assembly. Dephosphorylated by protein phosphatase 2A (PP2A) following interaction with lem-4l during mitotic exit, leading to mitotic nuclear envelope reassembly.

The protein resides in the nucleus. Functionally, DNA-binding protein which plays an essential role in nuclear envelope formation. Required for normal chromosome segregation during mitosis. Associates with the nuclear lamina via its interaction with LEM domain containing proteins emr-1 and lem-2. In association with lem-3, plays a role in radiation-induced DNA damage repair response. In Caenorhabditis elegans, this protein is Barrier-to-autointegration factor 1 (baf-1).